The sequence spans 619 residues: Threonine--tRNA ligase (619 aa).

An editing domain region spans residues 1 to 143; the sequence is MQLLLIHSDF…SRSIRIGEGE (143 aa). The segment at 201-500 is catalytic; that stretch reads PHVELMRRLE…AANGGLPMLP (300 aa). Zn(2+) is bound by residues Cys-293, His-345, and His-469.

Belongs to the class-II aminoacyl-tRNA synthetase family. As to quaternary structure, homodimer. The cofactor is Zn(2+).

It is found in the cytoplasm. The enzyme catalyses tRNA(Thr) + L-threonine + ATP = L-threonyl-tRNA(Thr) + AMP + diphosphate + H(+). Functionally, catalyzes the attachment of threonine to tRNA(Thr) in a two-step reaction: L-threonine is first activated by ATP to form Thr-AMP and then transferred to the acceptor end of tRNA(Thr). Also edits incorrectly charged L-seryl-tRNA(Thr). In Methanothrix thermoacetophila (strain DSM 6194 / JCM 14653 / NBRC 101360 / PT) (Methanosaeta thermophila), this protein is Threonine--tRNA ligase.